A 142-amino-acid chain; its full sequence is Large ribosomal subunit protein uL13 (142 aa).

This sequence belongs to the universal ribosomal protein uL13 family. As to quaternary structure, part of the 50S ribosomal subunit.

This protein is one of the early assembly proteins of the 50S ribosomal subunit, although it is not seen to bind rRNA by itself. It is important during the early stages of 50S assembly. The chain is Large ribosomal subunit protein uL13 from Ralstonia pickettii (strain 12J).